Consider the following 466-residue polypeptide: MITLYNTLTRQKEVFKPIEPGKVKMYVCGPTVYNYIHIGNARPAINYDVVRRYFEYQGYNVEYVSNFTDVDDKLIKRSQELNQSVPEIAEKYIAAFHEDVGALNVRKATSNPRVMDHMDDIIQFIKDLVDRGYAYESGGDVYFRTRKFEGYGKLSHQSIDDLKVGARIDAGEHKEDALDFTLWKKAKPGEISWDSPFGEGRPGWHIECSVMAFHELGPTIDIHAGGSDLQFPHHENEIAQSEAHNHAPFANYWMHNGFINIDNEKMSKSLGNFILVHDIIKEVDPDVLRFFMISVHYRSPINYNLELVESARSGLERIRNSYQLIEERAQIATNIENQQTYIDQIDAILNRFETVMNDDFNTANAITAWYDLAKLANKYVLENTTSTEVIDKFKAVYQIFSDVLGVPLKSKNADELLDEDVEKLIEERNEARKNKDFARADEIRDMLKSQNIILEDTPQGVRFKRG.

Residue C28 coordinates Zn(2+). The 'HIGH' region motif lies at 30–40 (PTVYNYIHIGN). Zn(2+) is bound by residues C208, H233, and E237. The short motif at 265–269 (KMSKS) is the 'KMSKS' region element. K268 serves as a coordination point for ATP.

It belongs to the class-I aminoacyl-tRNA synthetase family. In terms of assembly, monomer. Zn(2+) serves as cofactor.

It is found in the cytoplasm. The enzyme catalyses tRNA(Cys) + L-cysteine + ATP = L-cysteinyl-tRNA(Cys) + AMP + diphosphate. The sequence is that of Cysteine--tRNA ligase from Staphylococcus aureus (strain MSSA476).